A 431-amino-acid chain; its full sequence is Glutamate-1-semialdehyde 2,1-aminomutase (431 aa).

Residue Lys-265 is modified to N6-(pyridoxal phosphate)lysine.

This sequence belongs to the class-III pyridoxal-phosphate-dependent aminotransferase family. HemL subfamily. In terms of assembly, homodimer. It depends on pyridoxal 5'-phosphate as a cofactor.

It localises to the cytoplasm. It carries out the reaction (S)-4-amino-5-oxopentanoate = 5-aminolevulinate. Its pathway is porphyrin-containing compound metabolism; protoporphyrin-IX biosynthesis; 5-aminolevulinate from L-glutamyl-tRNA(Glu): step 2/2. This is Glutamate-1-semialdehyde 2,1-aminomutase from Vibrio atlanticus (strain LGP32) (Vibrio splendidus (strain Mel32)).